We begin with the raw amino-acid sequence, 342 residues long: MGYEKFTWVIKNFSSLQSEYIKSDIFVIGGCKWCLLAYPNGKQNASYLSLYLDGPTLKTLPCGCRRRIRFRLTVVNQLSENLSRRGEGKRWFDKKLPLCGYEEVLLLTKLNAKHGGFLVNNEVKIVAEVDVLEVIGKLDVSKESQEVIKPRKRMRLYGDGGAVSSHLHKETSSVDVNGFQVLPSQAESVKRIFERHPYMALEFRAKNQQLRASCINVLLSLIKTLCQSLQDISIDDLGQTEQVLTFLQNSGFKVDWLERKLEEVKEKKIQEHIGKSRMQGLEEDLKVFKKKCSDIEALLEKEKEELKGLKQKCSDIEALLEKEKGKVLAAAARTPLTFDDIL.

The region spanning 3 to 129 is the MATH domain; it reads YEKFTWVIKN…NNEVKIVAEV (127 aa). A coiled-coil region spans residues 253 to 327; that stretch reads KVDWLERKLE…ALLEKEKGKV (75 aa).

The chain is MATH domain and coiled-coil domain-containing protein At3g44800 from Arabidopsis thaliana (Mouse-ear cress).